A 341-amino-acid polypeptide reads, in one-letter code: Putative gustatory receptor 9a (341 aa).

Residue M1 is a topological domain, cytoplasmic. A helical membrane pass occupies residues 2 to 22 (SLWLEHFLTGYFQLCGLVCGW). Residues 23 to 30 (SGSRLGRL) lie on the Extracellular side of the membrane. A helical transmembrane segment spans residues 31–51 (LSSTFLVLILIELVGEIETYF). The Cytoplasmic portion of the chain corresponds to 52 to 68 (TEENPDNESVPAYFAKV). Residues 69–89 (IMGVNMAYKMIHAWIALSALF) traverse the membrane as a helical segment. Topologically, residues 90-113 (ECRRFRYLLEELPPVKATSFIYRH) are extracellular. The helical transmembrane segment at 114–134 (LILEIILFACNAFLVLSEYTI) threads the bilayer. At 135-202 (RGIYLENLRY…LAKVTRSLSH (68 aa)) the chain is on the cytoplasmic side. A helical transmembrane segment spans residues 203-223 (LFGLSLLLLNVLCLGDWIIVC). The Extracellular segment spans residues 224 to 233 (NVYFMVAYLQ). Residues 234-254 (VLPATLFLFGQVMFVVCPTLI) form a helical membrane-spanning segment. At 255 to 318 (KIWSICAASH…GIYHLNLQTL (64 aa)) the chain is on the cytoplasmic side. Residues 319–339 (AGMFFFILEALVIFLQFVSLV) form a helical membrane-spanning segment. Topologically, residues 340-341 (RT) are extracellular.

Belongs to the insect chemoreceptor superfamily. Gustatory receptor (GR) family. Gr2a subfamily. In terms of tissue distribution, expressed in neurons of the terminal external chemosensory organ of larvae.

It is found in the cell membrane. Its function is as follows. Probable gustatory receptor which mediates acceptance or avoidance behavior, depending on its substrates. This is Putative gustatory receptor 9a (Gr9a) from Drosophila melanogaster (Fruit fly).